We begin with the raw amino-acid sequence, 1852 residues long: Chitin synthase csmA (1852 aa).

A disordered region spans residues M1–S20. In terms of domain architecture, Myosin motor spans M1–E787. An N-linked (GlcNAc...) asparagine glycan is attached at N58. G102–T109 provides a ligand contact to ATP. Residues S599 to K646 form a disordered region. A glycan (N-linked (GlcNAc...) asparagine) is linked at N642. The interval L667 to D691 is actin-binding. A glycan (N-linked (GlcNAc...) asparagine) is linked at N840. The next 2 helical transmembrane spans lie at W895 to G915 and F930 to F950. A Cytochrome b5 heme-binding domain is found at Q958–F1017. Residues N1044 and N1195 are each glycosylated (N-linked (GlcNAc...) asparagine). The helical transmembrane segment at F1205–L1225 threads the bilayer. N-linked (GlcNAc...) asparagine glycosylation is found at N1428, N1462, and N1568. 3 helical membrane passes run I1600 to V1620, I1626 to I1646, and M1653 to L1673. The DEK-C domain maps to L1794–S1849.

It in the N-terminal section; belongs to the TRAFAC class myosin-kinesin ATPase superfamily. Myosin family. This sequence in the C-terminal section; belongs to the chitin synthase family. Class V subfamily. As to quaternary structure, binds F-actin via its N-terminal myosin motor-like domain (MMD). Interacts with kibesin kinA.

It localises to the cell membrane. The protein localises to the cell septum. It is found in the cell tip. It carries out the reaction [(1-&gt;4)-N-acetyl-beta-D-glucosaminyl](n) + UDP-N-acetyl-alpha-D-glucosamine = [(1-&gt;4)-N-acetyl-beta-D-glucosaminyl](n+1) + UDP + H(+). In terms of biological role, polymerizes chitin, a structural polymer of the cell wall and septum, by transferring the sugar moiety of UDP-GlcNAc to the non-reducing end of the growing chitin polymer. Plays an important role in polarized hyphal cell wall synthesis and maintenance of cell wall integrity. Its role in growth and morphogenesis is particularly important under low osmotic conditions. The polypeptide is Chitin synthase csmA (Emericella nidulans (Aspergillus nidulans)).